The following is a 334-amino-acid chain: Geminin coiled-coil domain-containing protein 1 (334 aa).

Residues serine 82–leucine 119 are a coiled coil. The segment at phenylalanine 143–lysine 167 is disordered.

The protein belongs to the GEMC1 family. Highly phosphorylated by CDK2; stimulates initiation of DNA replication.

The protein resides in the nucleus. Functionally, regulator of DNA replication. Promotes initiation of chromosomal DNA replication by mediating TOPBP1- and CDK2-dependent recruitment of CDC45L onto replication origins. This is Geminin coiled-coil domain-containing protein 1 (GMNC) from Homo sapiens (Human).